Consider the following 134-residue polypeptide: Profilin-3 (134 aa).

A disulfide bridge links cysteine 13 with cysteine 118. Residues 84 to 100 carry the Involved in PIP2 interaction motif; that stretch reads AVIRGKKGSGGITIKKT. Threonine 114 is modified (phosphothreonine).

This sequence belongs to the profilin family. As to quaternary structure, occurs in many kinds of cells as a complex with monomeric actin in a 1:1 ratio. Post-translationally, phosphorylated by MAP kinases.

Its subcellular location is the cytoplasm. It is found in the cytoskeleton. In terms of biological role, binds to actin and affects the structure of the cytoskeleton. At high concentrations, profilin prevents the polymerization of actin, whereas it enhances it at low concentrations. The protein is Profilin-3 of Olea europaea (Common olive).